We begin with the raw amino-acid sequence, 78 residues long: Nucleocapsid VP1 (78 aa).

As to quaternary structure, homodimer.

It localises to the virion. Functionally, completely wraps the viral circular dsDNA genome to form a nucleoprotein filament. These interactions between the viral genome and the nucleocapsid proteins probably maintain the DNA in A-form. This certainly protects the viral DNA under conditions such as the extreme desiccation of its host. The chain is Nucleocapsid VP1 from Sulfolobus (SPV1).